A 616-amino-acid polypeptide reads, in one-letter code: Chaperone protein HscA (616 aa).

Belongs to the heat shock protein 70 family.

In terms of biological role, chaperone involved in the maturation of iron-sulfur cluster-containing proteins. Has a low intrinsic ATPase activity which is markedly stimulated by HscB. Involved in the maturation of IscU. This Escherichia coli (strain SMS-3-5 / SECEC) protein is Chaperone protein HscA.